Reading from the N-terminus, the 424-residue chain is Histidine--tRNA ligase (424 aa).

The protein belongs to the class-II aminoacyl-tRNA synthetase family. In terms of assembly, homodimer.

Its subcellular location is the cytoplasm. It catalyses the reaction tRNA(His) + L-histidine + ATP = L-histidyl-tRNA(His) + AMP + diphosphate + H(+). The sequence is that of Histidine--tRNA ligase from Shewanella denitrificans (strain OS217 / ATCC BAA-1090 / DSM 15013).